A 389-amino-acid polypeptide reads, in one-letter code: Probable zinc transporter zip2 (389 aa).

Transmembrane regions (helical) follow at residues Gly6 to Leu26, Leu48 to Met68, Val88 to Leu108, Val267 to Ala289, Ser305 to Gly325, Phe329 to Ser349, and His368 to Ser388.

The protein belongs to the ZIP transporter (TC 2.A.5) family.

The protein localises to the endoplasmic reticulum membrane. In terms of biological role, probable zinc transporter that may mediate zinc remobilization from the endoplasmic reticulum under zinc limitation. The polypeptide is Probable zinc transporter zip2 (zip2) (Schizosaccharomyces pombe (strain 972 / ATCC 24843) (Fission yeast)).